Here is a 397-residue protein sequence, read N- to C-terminus: Argininosuccinate synthase (397 aa).

9 to 17 (AYSGGLDTS) lines the ATP pocket. Position 87 (Tyr87) interacts with L-citrulline. Gly117 serves as a coordination point for ATP. The L-aspartate site is built by Thr119, Asn123, and Asp124. Asn123 is a binding site for L-citrulline. L-citrulline-binding residues include Arg127, Ser175, Ser184, Glu257, and Tyr269.

The protein belongs to the argininosuccinate synthase family. Type 1 subfamily. As to quaternary structure, homotetramer.

The protein localises to the cytoplasm. The enzyme catalyses L-citrulline + L-aspartate + ATP = 2-(N(omega)-L-arginino)succinate + AMP + diphosphate + H(+). It functions in the pathway amino-acid biosynthesis; L-arginine biosynthesis; L-arginine from L-ornithine and carbamoyl phosphate: step 2/3. This chain is Argininosuccinate synthase, found in Dictyoglomus thermophilum (strain ATCC 35947 / DSM 3960 / H-6-12).